The following is a 243-amino-acid chain: DNA repair protein RecO (243 aa).

Belongs to the RecO family.

Functionally, involved in DNA repair and RecF pathway recombination. This is DNA repair protein RecO from Vibrio vulnificus (strain CMCP6).